Here is a 104-residue protein sequence, read N- to C-terminus: NADH-ubiquinone oxidoreductase 12 kDa subunit, mitochondrial (104 aa).

The protein belongs to the complex I NDUFS6 subunit family. In terms of assembly, complex I is composed of about 40 different subunits.

The protein resides in the mitochondrion inner membrane. Its function is as follows. Accessory subunit of the mitochondrial membrane respiratory chain NADH dehydrogenase (Complex I), that is believed not to be involved in catalysis. Complex I functions in the transfer of electrons from NADH to the respiratory chain. The immediate electron acceptor for the enzyme is believed to be ubiquinone. The sequence is that of NADH-ubiquinone oxidoreductase 12 kDa subunit, mitochondrial (nuo-12.3) from Neurospora crassa (strain ATCC 24698 / 74-OR23-1A / CBS 708.71 / DSM 1257 / FGSC 987).